The following is a 317-amino-acid chain: tRNA dimethylallyltransferase (317 aa).

An ATP-binding site is contributed by 14-21; sequence GPTAVGKT. Residue 16 to 21 coordinates substrate; sequence TAVGKT. The segment at 39-42 is interaction with substrate tRNA; that stretch reads DSMQ.

The protein belongs to the IPP transferase family. In terms of assembly, monomer. Mg(2+) serves as cofactor.

The enzyme catalyses adenosine(37) in tRNA + dimethylallyl diphosphate = N(6)-dimethylallyladenosine(37) in tRNA + diphosphate. Its function is as follows. Catalyzes the transfer of a dimethylallyl group onto the adenine at position 37 in tRNAs that read codons beginning with uridine, leading to the formation of N6-(dimethylallyl)adenosine (i(6)A). The chain is tRNA dimethylallyltransferase from Bacillus cereus (strain G9842).